Consider the following 246-residue polypeptide: NLP effector protein Pc118548 (246 aa).

Residues 1 to 19 (MNFRAFLLAAIAGIATINA) form the signal peptide. A Hepta-peptide GHRHDWE motif motif is present at residues 122 to 128 (GHRHYWE). Residue N141 is glycosylated (N-linked (GlcNAc...) asparagine).

Belongs to the Necrosis inducing protein (NPP1) family.

The protein localises to the secreted. In terms of biological role, secreted effector that contributes strongly to virulence during infection by P.capsici. Induces cell death in the Solanaceae, including Nicotiana benthamiana and hot pepper. The chain is NLP effector protein Pc118548 from Phytophthora capsici.